The primary structure comprises 332 residues: T-cell surface glycoprotein CD1c2 (332 aa).

Residues M1 to I17 form the signal peptide. The Extracellular portion of the chain corresponds to T18–S300. Residues N25, N38, and N75 are each glycosylated (N-linked (GlcNAc...) asparagine). 2 disulfides stabilise this stretch: C120-C184 and C224-C279. In terms of domain architecture, Ig-like spans P205–I292. Residues V301–L321 traverse the membrane as a helical segment. Residues C322 to P332 are Cytoplasmic-facing.

In terms of assembly, heterodimer with B2M (beta-2-microglobulin).

The protein resides in the cell membrane. It localises to the endosome membrane. In terms of biological role, antigen-presenting protein that binds self and non-self lipid and glycolipid antigens and presents them to T-cell receptors on natural killer T-cells. The protein is T-cell surface glycoprotein CD1c2 (CD1C2) of Cavia porcellus (Guinea pig).